The following is a 304-amino-acid chain: Iron(III) enterobactin esterase (304 aa).

A signal peptide spans 1-25; the sequence is MRTSLLVAALGLALAAALPGGAPLA. Residues S182, E242, and H283 each act as charge relay system in the active site.

It belongs to the esterase D family. In terms of assembly, monomer.

It is found in the periplasm. It carries out the reaction Fe(III)-enterobactin + 3 H2O + H(+) = Fe(III)-[N-(2,3-dihydroxybenzoyl)-L-serine] + 2 N-(2,3-dihydroxybenzoyl)-L-serine. It catalyses the reaction Fe(III)-enterobactin + H2O = Fe(III)-[N-(2,3-dihydroxybenzoyl)-L-serine]3 + H(+). The enzyme catalyses Fe(III)-[N-(2,3-dihydroxybenzoyl)-L-serine]3 + H2O + H(+) = Fe(III)-[N-(2,3-dihydroxybenzoyl)-L-serine]2 + N-(2,3-dihydroxybenzoyl)-L-serine. The catalysed reaction is Fe(III)-[N-(2,3-dihydroxybenzoyl)-L-serine]2 + H2O + H(+) = Fe(III)-[N-(2,3-dihydroxybenzoyl)-L-serine] + N-(2,3-dihydroxybenzoyl)-L-serine. In terms of biological role, catalyzes the hydrolysis of ferric enterobactin (Fe-Ent). Hydrolyzes Fe-Ent into three molecules of 2,3-dihydroxybenzoylserine (DHBS) still complexed with ferric iron. Iron reduction is necessary to obtain complete release of the metal from DHBS. It can hydrolyze salmochelin S4 (diglucosyl-C-Ent) but is not involved in iron acquisition by this siderophore. In Pseudomonas aeruginosa (strain ATCC 15692 / DSM 22644 / CIP 104116 / JCM 14847 / LMG 12228 / 1C / PRS 101 / PAO1), this protein is Iron(III) enterobactin esterase.